Reading from the N-terminus, the 228-residue chain is Ribose-5-phosphate isomerase A (228 aa).

Substrate-binding positions include 26-29 (SGST), 81-84 (DGAD), and 94-97 (KGGG). Glutamate 103 serves as the catalytic Proton acceptor. Lysine 121 is a substrate binding site.

This sequence belongs to the ribose 5-phosphate isomerase family. In terms of assembly, homodimer.

It carries out the reaction aldehydo-D-ribose 5-phosphate = D-ribulose 5-phosphate. It participates in carbohydrate degradation; pentose phosphate pathway; D-ribose 5-phosphate from D-ribulose 5-phosphate (non-oxidative stage): step 1/1. Catalyzes the reversible conversion of ribose-5-phosphate to ribulose 5-phosphate. This Shouchella clausii (strain KSM-K16) (Alkalihalobacillus clausii) protein is Ribose-5-phosphate isomerase A.